The chain runs to 97 residues: Putative septation protein SpoVG (97 aa).

The protein belongs to the SpoVG family.

Its function is as follows. Essential for sporulation. Interferes with or is a negative regulator of the pathway leading to asymmetric septation. The chain is Putative septation protein SpoVG from Bacillus cereus (strain 03BB102).